The following is a 527-amino-acid chain: Amine oxidase [flavin-containing] A (527 aa).

The residue at position 1 (Met1) is an N-acetylmethionine. Residues 1–497 are Cytoplasmic-facing; that stretch reads MENQEKASIA…HTFWERNLPS (497 aa). Ser383 carries the post-translational modification Phosphoserine. Cys406 is modified (S-8alpha-FAD cysteine). A helical; Anchor for type IV membrane protein transmembrane segment spans residues 498–518; it reads VSGLLKIIGFSTSVTALGFVL. Residues 519-527 are Mitochondrial intermembrane-facing; sequence YKYKLLPRS. The interaction with membrane phospholipid headgroups stretch occupies residues 520 to 522; it reads KYK.

This sequence belongs to the flavin monoamine oxidase family. Monomer, homo- or heterodimer (containing two subunits of similar size). Each subunit contains a covalently bound flavin. Enzymatically active as monomer. FAD serves as cofactor.

Its subcellular location is the mitochondrion outer membrane. The catalysed reaction is a secondary aliphatic amine + O2 + H2O = a primary amine + an aldehyde + H2O2. The enzyme catalyses a primary methyl amine + O2 + H2O = an aldehyde + H2O2 + NH4(+). It catalyses the reaction (R)-adrenaline + O2 + H2O = (R)-3,4-dihydroxymandelaldehyde + methylamine + H2O2. It carries out the reaction dopamine + O2 + H2O = 3,4-dihydroxyphenylacetaldehyde + H2O2 + NH4(+). The catalysed reaction is tyramine + O2 + H2O = (4-hydroxyphenyl)acetaldehyde + H2O2 + NH4(+). The enzyme catalyses (R)-noradrenaline + O2 + H2O = (R)-3,4-dihydroxymandelaldehyde + H2O2 + NH4(+). It catalyses the reaction serotonin + O2 + H2O = (5-hydroxyindol-3-yl)acetaldehyde + H2O2 + NH4(+). It carries out the reaction kynuramine + O2 + H2O = 3-(2-aminophenyl)-3-oxopropanal + H2O2 + NH4(+). The catalysed reaction is tryptamine + O2 + H2O = indole-3-acetaldehyde + H2O2 + NH4(+). The enzyme catalyses 2-phenylethylamine + O2 + H2O = 2-phenylacetaldehyde + H2O2 + NH4(+). In terms of biological role, catalyzes the oxidative deamination of primary and some secondary amine such as neurotransmitters, with concomitant reduction of oxygen to hydrogen peroxide and has important functions in the metabolism of neuroactive and vasoactive amines in the central nervous system and peripheral tissues. Preferentially oxidizes serotonin. Also catalyzes the oxidative deamination of kynuramine to 3-(2-aminophenyl)-3-oxopropanal that can spontaneously condense to 4-hydroxyquinoline. The polypeptide is Amine oxidase [flavin-containing] A (Pongo abelii (Sumatran orangutan)).